The sequence spans 151 residues: RNA polymerase-binding transcription factor DksA (151 aa).

Zn(2+) contacts are provided by Cys-114, Cys-117, Cys-135, and Cys-138. The segment at 114–138 (CNSCAVEIGIRRLEARPTANLCIDC) adopts a dksA C4-type zinc-finger fold.

It belongs to the DksA family. As to quaternary structure, interacts directly with the RNA polymerase.

The protein localises to the cytoplasm. Functionally, transcription factor that acts by binding directly to the RNA polymerase (RNAP). Required for negative regulation of rRNA expression and positive regulation of several amino acid biosynthesis promoters. Also required for regulation of fis expression. This is RNA polymerase-binding transcription factor DksA from Buchnera aphidicola subsp. Schizaphis graminum (strain Sg).